The primary structure comprises 681 residues: DNA-directed RNA polymerase subunit beta' (681 aa).

4 residues coordinate Zn(2+): cysteine 69, cysteine 71, cysteine 87, and cysteine 90. Mg(2+) is bound by residues aspartate 489, aspartate 491, and aspartate 493.

It belongs to the RNA polymerase beta' chain family. RpoC1 subfamily. In terms of assembly, in plastids the minimal PEP RNA polymerase catalytic core is composed of four subunits: alpha, beta, beta', and beta''. When a (nuclear-encoded) sigma factor is associated with the core the holoenzyme is formed, which can initiate transcription. It depends on Mg(2+) as a cofactor. Zn(2+) is required as a cofactor.

It localises to the plastid. Its subcellular location is the chloroplast. The enzyme catalyses RNA(n) + a ribonucleoside 5'-triphosphate = RNA(n+1) + diphosphate. In terms of biological role, DNA-dependent RNA polymerase catalyzes the transcription of DNA into RNA using the four ribonucleoside triphosphates as substrates. The protein is DNA-directed RNA polymerase subunit beta' of Solanum bulbocastanum (Wild potato).